An 87-amino-acid polypeptide reads, in one-letter code: U3-theraphotoxin-Hhn1a 3 (87 aa).

The first 24 residues, 1–24 (MVNMKASMFLTFAGLVLLFVVCYA), serve as a signal peptide directing secretion. The propeptide occupies 25 to 52 (PESEEKEFPKEMLSSIFAVDNDFKQEER). 3 cysteine pairs are disulfide-bonded: cysteine 54-cysteine 67, cysteine 61-cysteine 72, and cysteine 66-cysteine 79.

Belongs to the neurotoxin 10 (Hwtx-1) family. 51 (Hntx-8) subfamily. Hntx-8 sub-subfamily. As to expression, expressed by the venom gland.

The protein resides in the secreted. Functionally, ion channel inhibitor. This is U3-theraphotoxin-Hhn1a 3 from Cyriopagopus hainanus (Chinese bird spider).